Reading from the N-terminus, the 296-residue chain is Polyamine aminopropyltransferase (296 aa).

In terms of domain architecture, PABS spans 16–251 (HLWYFEYYTG…GMWSYTFASK (236 aa)). Residue glutamine 46 coordinates S-methyl-5'-thioadenosine. Spermidine is bound by residues histidine 77 and aspartate 101. Residues glutamate 121 and 152-153 (NG) contribute to the S-methyl-5'-thioadenosine site. The active-site Proton acceptor is aspartate 170. Position 170-173 (170-173 (DSTD)) interacts with spermidine.

The protein belongs to the spermidine/spermine synthase family. As to quaternary structure, homotetramer.

Its subcellular location is the cytoplasm. The catalysed reaction is S-adenosyl 3-(methylsulfanyl)propylamine + putrescine = S-methyl-5'-thioadenosine + spermidine + H(+). It participates in amine and polyamine biosynthesis; spermidine biosynthesis; spermidine from putrescine: step 1/1. With respect to regulation, strongly inhibited by S-adenosyl-1,8-diamino-3-thiooctane. Catalyzes the irreversible transfer of a propylamine group from the amino donor S-adenosylmethioninamine (decarboxy-AdoMet) to putrescine (1,4-diaminobutane) to yield spermidine. It has lower affinity and lower activity towards 1,3-diaminopropane, cadaverine (1,5-diaminopentane), agmatine, norspermidine and spermidine (in vitro). This Thermotoga maritima (strain ATCC 43589 / DSM 3109 / JCM 10099 / NBRC 100826 / MSB8) protein is Polyamine aminopropyltransferase.